Consider the following 101-residue polypeptide: Acylphosphatase (101 aa).

Positions 12–98 constitute an Acylphosphatase-like domain; sequence RVHVFVTGRV…EGLRGFEVKR (87 aa). Active-site residues include Arg-27 and Asn-45.

This sequence belongs to the acylphosphatase family.

The enzyme catalyses an acyl phosphate + H2O = a carboxylate + phosphate + H(+). This chain is Acylphosphatase (acyP), found in Trichormus variabilis (strain ATCC 29413 / PCC 7937) (Anabaena variabilis).